An 85-amino-acid chain; its full sequence is Large ribosomal subunit protein bL27 (85 aa).

The disordered stretch occupies residues 1 to 22 (MAHKKAGGSTRNGRDSESKRLG).

It belongs to the bacterial ribosomal protein bL27 family.

The chain is Large ribosomal subunit protein bL27 from Marinomonas sp. (strain MWYL1).